A 636-amino-acid chain; its full sequence is ATP-dependent zinc metalloprotease FtsH 1 (636 aa).

Over 1 to 18 (MKLSPPKKNLPPQKNNEP) the chain is Cytoplasmic. A helical membrane pass occupies residues 19-39 (PFPYLRLLVQVGIALFLVWIW). Residues 40 to 126 (QESLHKATVS…YGSVKPSLLS (87 aa)) lie on the Periplasmic side of the membrane. A helical membrane pass occupies residues 127-147 (QILFSWVVPILIFFLVWFALA). Over 148-636 (RFMGGGGAGY…KEAPSYSSTL (489 aa)) the chain is Cytoplasmic. 220–227 (GPPGTGKT) is a binding site for ATP. His-442 contributes to the Zn(2+) binding site. Residue Glu-443 is part of the active site. Positions 446 and 519 each coordinate Zn(2+).

The protein in the central section; belongs to the AAA ATPase family. This sequence in the C-terminal section; belongs to the peptidase M41 family. In terms of assembly, homohexamer. Zn(2+) serves as cofactor.

The protein localises to the cell inner membrane. Acts as a processive, ATP-dependent zinc metallopeptidase for both cytoplasmic and membrane proteins. Plays a role in the quality control of integral membrane proteins. The chain is ATP-dependent zinc metalloprotease FtsH 1 from Methylacidiphilum infernorum (isolate V4) (Methylokorus infernorum (strain V4)).